The sequence spans 96 residues: UPF0235 protein Shewmr4_1190 (96 aa).

Belongs to the UPF0235 family.

This chain is UPF0235 protein Shewmr4_1190, found in Shewanella sp. (strain MR-4).